A 571-amino-acid polypeptide reads, in one-letter code: Adenine deaminase (571 aa).

This sequence belongs to the metallo-dependent hydrolases superfamily. Adenine deaminase family. Mn(2+) is required as a cofactor.

The catalysed reaction is adenine + H2O + H(+) = hypoxanthine + NH4(+). The chain is Adenine deaminase from Dehalococcoides mccartyi (strain ATCC BAA-2266 / KCTC 15142 / 195) (Dehalococcoides ethenogenes (strain 195)).